Consider the following 362-residue polypeptide: Histidinol-phosphate aminotransferase (362 aa).

K219 bears the N6-(pyridoxal phosphate)lysine mark.

Belongs to the class-II pyridoxal-phosphate-dependent aminotransferase family. Histidinol-phosphate aminotransferase subfamily. In terms of assembly, homodimer. Requires pyridoxal 5'-phosphate as cofactor.

The catalysed reaction is L-histidinol phosphate + 2-oxoglutarate = 3-(imidazol-4-yl)-2-oxopropyl phosphate + L-glutamate. Its pathway is amino-acid biosynthesis; L-histidine biosynthesis; L-histidine from 5-phospho-alpha-D-ribose 1-diphosphate: step 7/9. In Maricaulis maris (strain MCS10) (Caulobacter maris), this protein is Histidinol-phosphate aminotransferase.